Consider the following 489-residue polypeptide: Putative (R)-citramalate synthase CimA (489 aa).

One can recognise a Pyruvate carboxyltransferase domain in the interval 3-255; it reads VKILDTTLRD…KTKIKKERLY (253 aa).

This sequence belongs to the alpha-IPM synthase/homocitrate synthase family. Homodimer.

The catalysed reaction is pyruvate + acetyl-CoA + H2O = (3R)-citramalate + CoA + H(+). Its pathway is amino-acid biosynthesis; L-isoleucine biosynthesis; 2-oxobutanoate from pyruvate: step 1/3. Its function is as follows. Catalyzes the condensation of pyruvate and acetyl-coenzyme A to form (R)-citramalate. This Archaeoglobus fulgidus (strain ATCC 49558 / DSM 4304 / JCM 9628 / NBRC 100126 / VC-16) protein is Putative (R)-citramalate synthase CimA (cimA).